Reading from the N-terminus, the 365-residue chain is Alanine racemase (365 aa).

Catalysis depends on K32, which acts as the Proton acceptor; specific for D-alanine. Position 32 is an N6-(pyridoxal phosphate)lysine (K32). Substrate is bound at residue R128. The active-site Proton acceptor; specific for L-alanine is the Y257. Residue M305 participates in substrate binding.

It belongs to the alanine racemase family. The cofactor is pyridoxal 5'-phosphate.

The enzyme catalyses L-alanine = D-alanine. The protein operates within amino-acid biosynthesis; D-alanine biosynthesis; D-alanine from L-alanine: step 1/1. Its function is as follows. Catalyzes the interconversion of L-alanine and D-alanine. May also act on other amino acids. The chain is Alanine racemase (alr) from Francisella tularensis subsp. holarctica (strain OSU18).